Here is an 89-residue protein sequence, read N- to C-terminus: Pigment-dispersing hormone peptides (89 aa).

The signal sequence occupies residues 1 to 22 (MTAMAVSGKLLTALVLSTYILG). At alanine 86 the chain carries Alanine amide.

It belongs to the arthropod PDH family.

Its subcellular location is the secreted. In terms of biological role, capable of inducing pigment dispersion in the chromatophores of the fiddler crab Uca pugilator. This is Pigment-dispersing hormone peptides from Romalea microptera (Eastern lubber grasshopper).